Reading from the N-terminus, the 137-residue chain is Small ribosomal subunit protein uS12 (137 aa).

Residues 1 to 23 (MPTINQLVRKGRKSKSSKSDAPA) are disordered. Asp102 is modified (3-methylthioaspartic acid).

It belongs to the universal ribosomal protein uS12 family. As to quaternary structure, part of the 30S ribosomal subunit. Contacts proteins S8 and S17. May interact with IF1 in the 30S initiation complex.

In terms of biological role, with S4 and S5 plays an important role in translational accuracy. Functionally, interacts with and stabilizes bases of the 16S rRNA that are involved in tRNA selection in the A site and with the mRNA backbone. Located at the interface of the 30S and 50S subunits, it traverses the body of the 30S subunit contacting proteins on the other side and probably holding the rRNA structure together. The combined cluster of proteins S8, S12 and S17 appears to hold together the shoulder and platform of the 30S subunit. The polypeptide is Small ribosomal subunit protein uS12 (Levilactobacillus brevis (strain ATCC 367 / BCRC 12310 / CIP 105137 / JCM 1170 / LMG 11437 / NCIMB 947 / NCTC 947) (Lactobacillus brevis)).